A 233-amino-acid chain; its full sequence is Large ribosomal subunit protein uL1 (233 aa).

The protein belongs to the universal ribosomal protein uL1 family. As to quaternary structure, part of the 50S ribosomal subunit.

Functionally, binds directly to 23S rRNA. The L1 stalk is quite mobile in the ribosome, and is involved in E site tRNA release. In terms of biological role, protein L1 is also a translational repressor protein, it controls the translation of the L11 operon by binding to its mRNA. In Vibrio parahaemolyticus serotype O3:K6 (strain RIMD 2210633), this protein is Large ribosomal subunit protein uL1.